A 172-amino-acid chain; its full sequence is Small ribosomal subunit protein uS5 (172 aa).

Residues 17–80 (MREKMIAVNR…EEARRKMIKV (64 aa)) form the S5 DRBM domain.

The protein belongs to the universal ribosomal protein uS5 family. In terms of assembly, part of the 30S ribosomal subunit. Contacts proteins S4 and S8.

Functionally, with S4 and S12 plays an important role in translational accuracy. Located at the back of the 30S subunit body where it stabilizes the conformation of the head with respect to the body. This chain is Small ribosomal subunit protein uS5, found in Herminiimonas arsenicoxydans.